A 1124-amino-acid polypeptide reads, in one-letter code: MDPFTEKLLERTRARRENLQRKMAERPTAAPRSMTHAKRARQPLSEASNQQPLSGGEEKSCTKPSPSKKRCSDNTEVEVSNLENKQPVESTSAKSCSPSPVSPQVQPQAADTISDSVAVPASLLGMRRGLNSRLEATAASSVKTRMQKLAEQRRRWDNDDMTDDIPESSLFSPMPSEEKAASPPRPLLSNASATPVGRRGRLANLAATICSWEDDVNHSFAKQNSVQEQPGTACLSKFSSASGASARINSSSVKQEATFCSQRDGDASLNKALSSSADDASLVNASISSSVKATSPVKSTTSITDAKSCEGQNPELLPKTPISPLKTGVSKPIVKSTLSQTVPSKGELSREICLQSQSKDKSTTPGGTGIKPFLERFGERCQEHSKESPARSTPHRTPIITPNTKAIQERLFKQDTSSSTTHLAQQLKQERQKELACLRGRFDKGNIWSAEKGGNSKSKQLETKQETHCQSTPLKKHQGVSKTQSLPVTEKVTENQIPAKNSSTEPKGFTECEMTKSSPLKITLFLEEDKSLKVTSDPKVEQKIEVIREIEMSVDDDDINSSKVINDLFSDVLEEGELDMEKSQEEMDQALAESSEEQEDALNISSMSLLAPLAQTVGVVSPESLVSTPRLELKDTSRSDESPKPGKFQRTRVPRAESGDSLGSEDRDLLYSIDAYRSQRFKETERPSIKQVIVRKEDVTSKLDEKNNAFPCQVNIKQKMQELNNEINMQQTVIYQASQALNCCVDEEHGKGSLEEAEAERLLLIATGKRTLLIDELNKLKNEGPQRKNKASPQSEFMPSKGSVTLSEIRLPLKADFVCSTVQKPDAANYYYLIILKAGAENMVATPLASTSNSLNGDALTFTTTFTLQDVSNDFEINIEVYSLVQKKDPSGLDKKKKTSKSKAITPKRLLTSITTKSNIHSSVMASPGGLSAVRTSNFALVGSYTLSLSSVGNTKFVLDKVPFLSSLEGHIYLKIKCQVNSSVEERGFLTIFEDVSGFGAWHRRWCVLSGNCISYWTYPDDEKRKNPIGRINLANCTSRQIEPANREFCARRNTFELITVRPQREDDRETLVSQCRDTLCVTKNWLSADTKEERDLWMQKLNQVLVDIRLWQPDACYKPIGKP.

Position 1 is an N-acetylmethionine (Met1). The span at 1-25 (MDPFTEKLLERTRARRENLQRKMAE) shows a compositional bias: basic and acidic residues. The interval 1–45 (MDPFTEKLLERTRARRENLQRKMAERPTAAPRSMTHAKRARQPLS) is required for ubiquitination. Disordered regions lie at residues 1-113 (MDPF…ADTI) and 136-196 (ATAA…ATPV). Residues 1 to 155 (MDPFTEKLLE…MQKLAEQRRR (155 aa)) form an interaction with CD2AP region. Residues 1-230 (MDPFTEKLLE…AKQNSVQEQP (230 aa)) are nuclear localization. Residues Ser54 and Ser72 each carry the phosphoserine modification. A compositionally biased stretch (polar residues) spans 77–96 (VEVSNLENKQPVESTSAKSC). Phosphoserine is present on residues Ser97 and Ser102. Residues 97–108 (SPSPVSPQVQPQ) are compositionally biased toward low complexity. The span at 148-158 (KLAEQRRRWDN) shows a compositional bias: basic and acidic residues. Residues Ser172 and Ser182 each carry the phosphoserine modification. At Thr194 the chain carries Phosphothreonine. Residues Ser225 and Ser252 each carry the phosphoserine modification. Residues 231–676 (GTACLSKFSS…RDLLYSIDAY (446 aa)) are interaction with F-actin. Residue Lys254 forms a Glycyl lysine isopeptide (Lys-Gly) (interchain with G-Cter in SUMO1) linkage. Ser261 carries the post-translational modification Phosphoserine. The span at 294–305 (TSPVKSTTSITD) shows a compositional bias: polar residues. Residues 294–328 (TSPVKSTTSITDAKSCEGQNPELLPKTPISPLKTG) are disordered. A Phosphothreonine modification is found at Thr320. Ser323 and Ser339 each carry phosphoserine. Phosphothreonine is present on Thr364. Lys371 is subject to N6-acetyllysine. The span at 380-389 (RCQEHSKESP) shows a compositional bias: basic and acidic residues. Positions 380 to 399 (RCQEHSKESPARSTPHRTPI) are disordered. Phosphothreonine occurs at positions 397 and 401. Phosphoserine is present on residues Ser417, Ser419, Ser449, Ser485, Ser518, Ser553, and Ser561. Positions 569–604 (FSDVLEEGELDMEKSQEEMDQALAESSEEQEDALNI) form a coiled coil. Disordered stretches follow at residues 579–600 (DMEK…EQED) and 625–664 (LVST…SLGS). 2 stretches are compositionally biased toward basic and acidic residues: residues 631 to 644 (LELK…ESPK) and 654 to 664 (PRAESGDSLGS). Residues Ser637, Ser642, Ser658, Ser661, and Ser664 each carry the phosphoserine modification. Tyr671 is modified (phosphotyrosine). A phosphoserine mark is found at Ser678, Ser688, Ser792, and Ser927. The interval 730–1124 (QQTVIYQASQ…DACYKPIGKP (395 aa)) is localization to the cleavage furrow. Positions 983–1107 (SVEERGFLTI…WMQKLNQVLV (125 aa)) constitute a PH domain.

Interacts with F-actin. Interacts with CD2AP. May interact with RHOA. Interacts with FZR1/CDH1 during mitotic exit. Phosphorylated during mitosis. Post-translationally, ubiquitinated, and this requires FZR1/CDH1. As to expression, ubiquitously expressed. Present at highest levels in the brain, at high levels in the placenta and testis, at intermediate levels in the intestine, ovary, skeletal muscle and thymus and at lower levels in heart, kidney, liver, lung, pancreas, prostate and spleen. In the kidney, it is widely expressed in tubules, but sparsely expressed in the glomerulus. Expression is significantly increased in renal biopsy specimens from idiopathic FSGS. Overexpressed in many tumor types including breast, colorectal, endometrial, hepatic, kidney, lung, ovarian and pancreatic tumors.

Its subcellular location is the nucleus. The protein resides in the cytoplasm. It localises to the cytoskeleton. It is found in the cell cortex. The protein localises to the cell projection. Its subcellular location is the bleb. Required for cytokinesis. Essential for the structural integrity of the cleavage furrow and for completion of cleavage furrow ingression. Plays a role in bleb assembly during metaphase and anaphase of mitosis. May play a significant role in podocyte cell migration. This Homo sapiens (Human) protein is Anillin (ANLN).